The chain runs to 114 residues: Photosystem II reaction center Psb28 protein (114 aa).

The protein belongs to the Psb28 family. Part of the photosystem II complex.

The protein resides in the cellular thylakoid membrane. The chain is Photosystem II reaction center Psb28 protein from Rippkaea orientalis (strain PCC 8801 / RF-1) (Cyanothece sp. (strain PCC 8801)).